Consider the following 372-residue polypeptide: CXADR-like membrane protein (372 aa).

The signal sequence occupies residues 1-17; that stretch reads MSLFFLWLVTYYVGTLG. Ig-like C2-type domains follow at residues 18-126 and 134-223; these read THTE…VILK and PKCE…VRVT. Residues 18–234 lie on the Extracellular side of the membrane; that stretch reads THTEIKRVAE…QYVQSIGMVA (217 aa). 2 disulfides stabilise this stretch: cysteine 34–cysteine 110 and cysteine 152–cysteine 207. N-linked (GlcNAc...) asparagine glycans are attached at residues asparagine 73 and asparagine 196. The helical transmembrane segment at 235–255 threads the bilayer; the sequence is GAVTGIVAGALLIFLLIWLLI. At 256–372 the chain is on the cytoplasmic side; it reads RRKSKERYEE…PSQSRAFQTV (117 aa). The segment covering 263 to 280 has biased composition (basic and acidic residues); sequence YEEEDRPNEIREDAEAPR. The interval 263–372 is disordered; sequence YEEEDRPNEI…PSQSRAFQTV (110 aa). 2 stretches are compositionally biased toward low complexity: residues 287 to 313 and 352 to 361; these read SSSS…ASRS and LTKAETTLST. The segment covering 362–372 has biased composition (polar residues); the sequence is MPSQSRAFQTV.

As to expression, predominantly expressed in the white adipose tissue.

The protein localises to the cell junction. It localises to the tight junction. It is found in the cell membrane. May be involved in the cell-cell adhesion. May play a role in adipocyte differentiation and development of obesity. Is required for normal small intestine development. The chain is CXADR-like membrane protein (Clmp) from Rattus norvegicus (Rat).